The chain runs to 274 residues: Rhamnulose-1-phosphate aldolase (274 aa).

The active site involves glutamate 117. Zn(2+)-binding residues include histidine 141, histidine 143, and histidine 212.

Belongs to the aldolase class II family. RhaD subfamily. As to quaternary structure, homotetramer. It depends on Zn(2+) as a cofactor.

The protein resides in the cytoplasm. The enzyme catalyses L-rhamnulose 1-phosphate = (S)-lactaldehyde + dihydroxyacetone phosphate. Its pathway is carbohydrate degradation; L-rhamnose degradation; glycerone phosphate from L-rhamnose: step 3/3. Functionally, catalyzes the reversible cleavage of L-rhamnulose-1-phosphate to dihydroxyacetone phosphate (DHAP) and L-lactaldehyde. This Yersinia pseudotuberculosis serotype IB (strain PB1/+) protein is Rhamnulose-1-phosphate aldolase.